The chain runs to 431 residues: Glucose-1-phosphate adenylyltransferase (431 aa).

Alpha-D-glucose 1-phosphate-binding positions include Tyr109, Gly175, 190 to 191 (EK), and Ser208.

It belongs to the bacterial/plant glucose-1-phosphate adenylyltransferase family. As to quaternary structure, homotetramer.

The catalysed reaction is alpha-D-glucose 1-phosphate + ATP + H(+) = ADP-alpha-D-glucose + diphosphate. The protein operates within glycan biosynthesis; glycogen biosynthesis. Its function is as follows. Involved in the biosynthesis of ADP-glucose, a building block required for the elongation reactions to produce glycogen. Catalyzes the reaction between ATP and alpha-D-glucose 1-phosphate (G1P) to produce pyrophosphate and ADP-Glc. The chain is Glucose-1-phosphate adenylyltransferase from Alteromonas mediterranea (strain DSM 17117 / CIP 110805 / LMG 28347 / Deep ecotype).